Here is a 161-residue protein sequence, read N- to C-terminus: UPF0225 protein HI_0277 (161 aa).

It belongs to the UPF0225 family.

The polypeptide is UPF0225 protein HI_0277 (Haemophilus influenzae (strain ATCC 51907 / DSM 11121 / KW20 / Rd)).